A 91-amino-acid polypeptide reads, in one-letter code: Small ribosomal subunit protein bS18 (91 aa).

This sequence belongs to the bacterial ribosomal protein bS18 family. Part of the 30S ribosomal subunit. Forms a tight heterodimer with protein bS6.

In terms of biological role, binds as a heterodimer with protein bS6 to the central domain of the 16S rRNA, where it helps stabilize the platform of the 30S subunit. In Thiobacillus denitrificans (strain ATCC 25259 / T1), this protein is Small ribosomal subunit protein bS18.